The primary structure comprises 279 residues: Bifunctional protein FolD 1 (279 aa).

NADP(+) is bound by residues 166–168 (GRS) and Ser191.

It belongs to the tetrahydrofolate dehydrogenase/cyclohydrolase family. As to quaternary structure, homodimer.

It carries out the reaction (6R)-5,10-methylene-5,6,7,8-tetrahydrofolate + NADP(+) = (6R)-5,10-methenyltetrahydrofolate + NADPH. The catalysed reaction is (6R)-5,10-methenyltetrahydrofolate + H2O = (6R)-10-formyltetrahydrofolate + H(+). It functions in the pathway one-carbon metabolism; tetrahydrofolate interconversion. In terms of biological role, catalyzes the oxidation of 5,10-methylenetetrahydrofolate to 5,10-methenyltetrahydrofolate and then the hydrolysis of 5,10-methenyltetrahydrofolate to 10-formyltetrahydrofolate. The chain is Bifunctional protein FolD 1 from Salinispora arenicola (strain CNS-205).